A 417-amino-acid polypeptide reads, in one-letter code: Tyrosine--tRNA ligase (417 aa).

Tyr39 contacts L-tyrosine. The 'HIGH' region signature appears at Pro44 to His53. Residues Tyr176 and Gln180 each contribute to the L-tyrosine site. A 'KMSKS' region motif is present at residues Lys236–Ser240. Lys239 serves as a coordination point for ATP. In terms of domain architecture, S4 RNA-binding spans Val350 to Pro416.

It belongs to the class-I aminoacyl-tRNA synthetase family. TyrS type 1 subfamily. Homodimer.

The protein localises to the cytoplasm. It catalyses the reaction tRNA(Tyr) + L-tyrosine + ATP = L-tyrosyl-tRNA(Tyr) + AMP + diphosphate + H(+). In terms of biological role, catalyzes the attachment of tyrosine to tRNA(Tyr) in a two-step reaction: tyrosine is first activated by ATP to form Tyr-AMP and then transferred to the acceptor end of tRNA(Tyr). The protein is Tyrosine--tRNA ligase of Agrobacterium fabrum (strain C58 / ATCC 33970) (Agrobacterium tumefaciens (strain C58)).